The primary structure comprises 362 residues: Cobalt-precorrin-5B C(1)-methyltransferase (362 aa).

Belongs to the CbiD family.

The enzyme catalyses Co-precorrin-5B + S-adenosyl-L-methionine = Co-precorrin-6A + S-adenosyl-L-homocysteine. It functions in the pathway cofactor biosynthesis; adenosylcobalamin biosynthesis; cob(II)yrinate a,c-diamide from sirohydrochlorin (anaerobic route): step 6/10. Functionally, catalyzes the methylation of C-1 in cobalt-precorrin-5B to form cobalt-precorrin-6A. The chain is Cobalt-precorrin-5B C(1)-methyltransferase from Burkholderia cenocepacia (strain ATCC BAA-245 / DSM 16553 / LMG 16656 / NCTC 13227 / J2315 / CF5610) (Burkholderia cepacia (strain J2315)).